A 449-amino-acid chain; its full sequence is MAICSFFLQGRCRYGEKCWNEHPRGGSSRYQSQNRYQEPPGNAKGTWGSSSQRYVQPSSFSRSTTWVNRDNEKPSSGSHSGFDNRNVKFTAATGFPSSQNRFAALSSQDNSRDAQTDKGNIIDDITNDMEIWESSGQWMFSVYSMLREKKNISGFADFSPEELRLEYYACQAEGNPLKYINAVQQLGSKWKQRILELKNLNPSSKMALFNELSSPSSDMTSGYNGQQKPAFGSSSFPTNNTAPTAATFSFKADAANAAKAGATNSLAGSNVPAFGNKPTSAPSFGSGGAATAASFSFAPSSSSNFGATTSTSGFGNASNTASFQGTANSAAAPAFGVASSSTAATGFGGGFSTTGAMNTGVRDLFSAGTVGPGPVTSLFVQTTGPLHATASSTSLDGQSFRPSALNTTNSLFTPQNELSAEELAQFKAQRFTLGKIPLKPPPADLLNVS.

The C3H1-type zinc-finger motif lies at 1 to 25; it reads MAICSFFLQGRCRYGEKCWNEHPRG. 2 disordered regions span residues 22-84 and 218-237; these read HPRG…GFDN and DMTS…SSFP. Composition is skewed to polar residues over residues 47-83 and 218-227; these read WGSS…SGFD and DMTSGYNGQQ. FG repeat units follow at residues 231–232, 274–275, 284–285, 305–306, 314–315, 335–336, and 347–348; these read FG.

As to quaternary structure, probable component of the nuclear pore complex (NPC).

It is found in the nucleus. The protein localises to the nuclear pore complex. It localises to the nucleus membrane. Required for the export of mRNAs containing poly(A) tails from the nucleus into the cytoplasm. The chain is Nucleoporin NUP42 (nup42) from Xenopus tropicalis (Western clawed frog).